The chain runs to 672 residues: Fumonisin cluster-specific transcription factor FUM21 (672 aa).

Residues 30–56 constitute a DNA-binding region (zn(2)-C6 fungal-type); sequence CESCKRRKVRCNGTNPCNQCQKSSIEC. Disordered stretches follow at residues 65–111 and 190–212; these read ANDG…RFDG and KSSGPSYGMSEPPSRDSDPGFNT. A compositionally biased stretch (polar residues) spans 77–93; sequence SPVQHTRGSLTPPQTSP.

Its subcellular location is the nucleus. In terms of biological role, transcription factor that regulates the expression of the gene cluster that mediates the biosynthesis of fumonisins B1 (FB1), B2 (FB2), B3 (FB3), and B4 (FB4), which are carcinogenic mycotoxins. The protein is Fumonisin cluster-specific transcription factor FUM21 (FUM21) of Gibberella moniliformis (strain M3125 / FGSC 7600) (Maize ear and stalk rot fungus).